The primary structure comprises 313 residues: Ribonuclease HIII (313 aa).

The RNase H type-2 domain maps to 94–310 (MSVIGSDEVG…TQKAKRLVER (217 aa)). Positions 100, 101, and 205 each coordinate a divalent metal cation.

Belongs to the RNase HII family. RnhC subfamily. Mn(2+) serves as cofactor. Mg(2+) is required as a cofactor.

It localises to the cytoplasm. The catalysed reaction is Endonucleolytic cleavage to 5'-phosphomonoester.. Its function is as follows. Endonuclease that specifically degrades the RNA of RNA-DNA hybrids. The protein is Ribonuclease HIII of Bacillus velezensis (strain DSM 23117 / BGSC 10A6 / LMG 26770 / FZB42) (Bacillus amyloliquefaciens subsp. plantarum).